Here is a 96-residue protein sequence, read N- to C-terminus: Pore-forming peptide amoebapore B (96 aa).

Positions 1 to 19 (MRAIIFVLIFAIAFAATRE) are cleaved as a signal peptide. One can recognise a Saposin B-type domain in the interval 20–96 (GAILCNLCKD…VVVCEKIHAC (77 aa)). 3 disulfides stabilise this stretch: C24–C96, C27–C90, and C54–C65.

As to quaternary structure, monomer. Homodimer. Hexamer; formed during insertion in the membrane.

It localises to the cytoplasmic granule. Its function is as follows. Forms pores in the cell membrane of host cells. Has antibacterial activity against M.luteus, no activity against E.coli. Implicated in the cytolytic activity of the parasite. This is Pore-forming peptide amoebapore B from Entamoeba histolytica (strain ATCC 30459 / HM-1:IMSS / ABRM).